Consider the following 256-residue polypeptide: Thiazole synthase (256 aa).

The active-site Schiff-base intermediate with DXP is lysine 95. 1-deoxy-D-xylulose 5-phosphate-binding positions include glycine 156, 182-183, and 204-205; these read AG and NT.

This sequence belongs to the ThiG family. In terms of assembly, homotetramer. Forms heterodimers with either ThiH or ThiS.

It localises to the cytoplasm. It carries out the reaction [ThiS sulfur-carrier protein]-C-terminal-Gly-aminoethanethioate + 2-iminoacetate + 1-deoxy-D-xylulose 5-phosphate = [ThiS sulfur-carrier protein]-C-terminal Gly-Gly + 2-[(2R,5Z)-2-carboxy-4-methylthiazol-5(2H)-ylidene]ethyl phosphate + 2 H2O + H(+). It participates in cofactor biosynthesis; thiamine diphosphate biosynthesis. In terms of biological role, catalyzes the rearrangement of 1-deoxy-D-xylulose 5-phosphate (DXP) to produce the thiazole phosphate moiety of thiamine. Sulfur is provided by the thiocarboxylate moiety of the carrier protein ThiS. In vitro, sulfur can be provided by H(2)S. The polypeptide is Thiazole synthase (Salmonella agona (strain SL483)).